The chain runs to 521 residues: Cholesterol side-chain cleavage enzyme, mitochondrial (521 aa).

Residues 1 to 39 (MLAKGLPPRSVLVKGCQTFLSAPKERLGHLRVPTSEGAG) constitute a mitochondrion transit peptide. C462 contacts heme.

It belongs to the cytochrome P450 family. As to quaternary structure, interacts with FDX1/adrenodoxin. The cofactor is heme.

The protein localises to the mitochondrion inner membrane. The enzyme catalyses 6 reduced [adrenodoxin] + cholesterol + 3 O2 + 6 H(+) = 4-methylpentanal + pregnenolone + 6 oxidized [adrenodoxin] + 4 H2O. It carries out the reaction 2 reduced [adrenodoxin] + cholesterol + O2 + 2 H(+) = (22R)-hydroxycholesterol + 2 oxidized [adrenodoxin] + H2O. It catalyses the reaction (22R)-hydroxycholesterol + 2 reduced [adrenodoxin] + O2 + 2 H(+) = (20R,22R)-20,22-dihydroxycholesterol + 2 oxidized [adrenodoxin] + H2O. The catalysed reaction is (20R,22R)-20,22-dihydroxycholesterol + 2 reduced [adrenodoxin] + O2 + 2 H(+) = 4-methylpentanal + pregnenolone + 2 oxidized [adrenodoxin] + 2 H2O. It participates in lipid metabolism; C21-steroid hormone metabolism. The protein operates within steroid metabolism; cholesterol metabolism. Its function is as follows. A cytochrome P450 monooxygenase that catalyzes the side-chain hydroxylation and cleavage of cholesterol to pregnenolone, the precursor of most steroid hormones. Catalyzes three sequential oxidation reactions of cholesterol, namely the hydroxylation at C22 followed with the hydroxylation at C20 to yield 20R,22R-hydroxycholesterol that is further cleaved between C20 and C22 to yield the C21-steroid pregnenolone and 4-methylpentanal. Mechanistically, uses molecular oxygen inserting one oxygen atom into a substrate and reducing the second into a water molecule. Two electrons are provided by NADPH via a two-protein mitochondrial transfer system comprising flavoprotein FDXR (adrenodoxin/ferredoxin reductase) and nonheme iron-sulfur protein FDX1 or FDX2 (adrenodoxin/ferredoxin). In Macaca fascicularis (Crab-eating macaque), this protein is Cholesterol side-chain cleavage enzyme, mitochondrial (CYP11A1).